The primary structure comprises 540 residues: MELSRRKMCCYIQFCCFVLIGCFISQICASSDAIFYESFDESFEGSWIVSEKEDYPGEWKHSKSEGHDDYGLLVSDKARKYAIVKELEKPVELKDGTIVLQYEVRLQNGLECGGAYLKYLRPQDAGWTAKGFDNESPYSIMFGPDKCGATNKVHFILKHKNPKSGDYVEHHLKFPPSVPSDKLTHVYTAVIKPDNELVILIDGEEKKKANFLSSEDFEPALIPTKTIPDPDDKKPEDWDERAKIPDPEATKPDDWDEDAPMEILDEEAEKPEGWLDDEPEEIDDPEAVKPEDWDDEEDGEWEAPQIENPKCESAPGCGEWRRPLKRNPAYKGKWHAPLIDNPAYKGIWKPREIPNPDYFELEKPNFEPIAAIGIEDLDQQDGILFDNILIASDEKTAAKSGILLGSRSLRWKKRNRRLKKNQPLLDGLKGIQKAVFDVLYKIADLPFLGDHKVKVLELIEKAETQPNITIGVIVSIIVVIFSILLKLLFGGKKAAPKVNVVPKKKEEPEASNTAEVREGEEEKTEGEVAAAPRRRPRRDT.

The N-terminal stretch at 1 to 29 is a signal peptide; the sequence is MELSRRKMCCYIQFCCFVLIGCFISQICA. The Lumenal portion of the chain corresponds to 30 to 469; that stretch reads SSDAIFYESF…EKAETQPNIT (440 aa). Ca(2+) is bound by residues Ser38 and Asp69. The cysteines at positions 112 and 147 are disulfide-linked. Residues Tyr116, Lys118, Tyr138, and Asp145 each contribute to the an alpha-D-glucoside site. The tract at residues 221–301 is disordered; the sequence is LIPTKTIPDP…DWDDEEDGEW (81 aa). Residues 227 to 360 are p domain (Extended arm); that stretch reads IPDPDDKKPE…REIPNPDYFE (134 aa). The span at 228 to 253 shows a compositional bias: basic and acidic residues; that stretch reads PDPDDKKPEDWDERAKIPDPEATKPD. 5 consecutive repeat copies span residues 229 to 240, 246 to 257, 265 to 276, 284 to 295, and 299 to 309. 2 4 X approximate repeats regions span residues 229–295 and 299–356; these read DPDD…DWDD and GEWE…IPNP. Acidic residues-rich tracts occupy residues 254 to 285 and 292 to 301; these read DWDE…IDDP and DWDDEEDGEW. Cysteines 311 and 317 form a disulfide. A run of 3 repeats spans residues 318–328, 332–342, and 346–356. Residue Glu375 coordinates an alpha-D-glucoside. Asp386 contacts Ca(2+). Residue Asn467 is glycosylated (N-linked (GlcNAc...) asparagine). The helical transmembrane segment at 470-490 threads the bilayer; the sequence is IGVIVSIIVVIFSILLKLLFG. Over 491–540 the chain is Cytoplasmic; it reads GKKAAPKVNVVPKKKEEPEASNTAEVREGEEEKTEGEVAAAPRRRPRRDT. The interval 499 to 540 is disordered; sequence NVVPKKKEEPEASNTAEVREGEEEKTEGEVAAAPRRRPRRDT.

This sequence belongs to the calreticulin family.

Its subcellular location is the endoplasmic reticulum membrane. Calcium-binding protein that interacts with newly synthesized monoglucosylated glycoproteins in the endoplasmic reticulum. It may act in assisting protein assembly and/or in the retention within the ER of unassembled protein subunits. It seems to play a major role in the quality control apparatus of the ER by the retention of incorrectly folded proteins. The chain is Calnexin homolog from Helianthus tuberosus (Jerusalem artichoke).